The sequence spans 328 residues: Basic leucine zipper (bZIP) transcription factor atfB (328 aa).

The tract at residues 1 to 39 is disordered; it reads MLPEQSAFGRSAMPGSDAVNPGPSPFAPPPNSFSGDFLG. Residues 22–31 are compositionally biased toward pro residues; sequence GPSPFAPPPN. The tract at residues 163–202 is basic motif; the sequence is KAKREKFLERNRLAASKCRQKKKEHTQLLESRYREQSDKK. Positions 163-226 constitute a bZIP domain; it reads KAKREKFLER…LGLKNEVLKH (64 aa). A leucine-zipper region spans residues 205–219; that stretch reads LVSEIARLRSEILGL. The tract at residues 250-313 is disordered; sequence TTAPDLTDVP…SEASVLTENS (64 aa). Positions 262 to 277 are enriched in polar residues; that stretch reads ASSSEGPMTPRPQQAL. Residues 283 to 305 are compositionally biased toward basic and acidic residues; the sequence is DPLHLEPSRADGSTDHSVRRDSE.

This sequence belongs to the bZIP family. ATF subfamily.

It localises to the nucleus. In terms of biological role, transcription factor that acts as a key player in the regulatory circuit that integrates secondary metabolism and cellular response to oxidative stress. Regulates the genes involved in development, as well as osmotic, oxidative, and cell wall stresses. Participates in the caspofungin paradoxical effect (CPE), where fungi grow beyond the minimum inhibitory concentration of caspofungin. Plays a role in virulence. The polypeptide is Basic leucine zipper (bZIP) transcription factor atfB (Aspergillus fumigatus (strain ATCC MYA-4609 / CBS 101355 / FGSC A1100 / Af293) (Neosartorya fumigata)).